The chain runs to 407 residues: Imidazolonepropionase (407 aa).

Residues His74 and His76 each coordinate Fe(3+). Zn(2+) contacts are provided by His74 and His76. Arg83, Tyr146, and His179 together coordinate 4-imidazolone-5-propanoate. Tyr146 is a binding site for N-formimidoyl-L-glutamate. His244 lines the Fe(3+) pocket. His244 is a binding site for Zn(2+). Residue Gln247 participates in 4-imidazolone-5-propanoate binding. Asp319 provides a ligand contact to Fe(3+). Asp319 lines the Zn(2+) pocket. 2 residues coordinate N-formimidoyl-L-glutamate: Asn321 and Gly323. Thr324 serves as a coordination point for 4-imidazolone-5-propanoate.

It belongs to the metallo-dependent hydrolases superfamily. HutI family. Requires Zn(2+) as cofactor. Fe(3+) is required as a cofactor.

It is found in the cytoplasm. The catalysed reaction is 4-imidazolone-5-propanoate + H2O = N-formimidoyl-L-glutamate. It participates in amino-acid degradation; L-histidine degradation into L-glutamate; N-formimidoyl-L-glutamate from L-histidine: step 3/3. Functionally, catalyzes the hydrolytic cleavage of the carbon-nitrogen bond in imidazolone-5-propanoate to yield N-formimidoyl-L-glutamate. It is the third step in the universal histidine degradation pathway. The sequence is that of Imidazolonepropionase from Salmonella schwarzengrund (strain CVM19633).